A 443-amino-acid chain; its full sequence is D-serine dehydratase (443 aa).

Lysine 118 bears the N6-(pyridoxal phosphate)lysine mark.

Belongs to the serine/threonine dehydratase family. DsdA subfamily. In terms of assembly, monomer. The cofactor is pyridoxal 5'-phosphate.

The catalysed reaction is D-serine = pyruvate + NH4(+). This is D-serine dehydratase from Escherichia coli O17:K52:H18 (strain UMN026 / ExPEC).